The sequence spans 255 residues: Thiazole synthase (255 aa).

Lys-96 functions as the Schiff-base intermediate with DXP in the catalytic mechanism. Residues Gly-157, Ala-183–Gly-184, and Asn-205–Ser-206 each bind 1-deoxy-D-xylulose 5-phosphate.

Belongs to the ThiG family. In terms of assembly, homotetramer. Forms heterodimers with either ThiH or ThiS.

The protein resides in the cytoplasm. It carries out the reaction [ThiS sulfur-carrier protein]-C-terminal-Gly-aminoethanethioate + 2-iminoacetate + 1-deoxy-D-xylulose 5-phosphate = [ThiS sulfur-carrier protein]-C-terminal Gly-Gly + 2-[(2R,5Z)-2-carboxy-4-methylthiazol-5(2H)-ylidene]ethyl phosphate + 2 H2O + H(+). The protein operates within cofactor biosynthesis; thiamine diphosphate biosynthesis. Catalyzes the rearrangement of 1-deoxy-D-xylulose 5-phosphate (DXP) to produce the thiazole phosphate moiety of thiamine. Sulfur is provided by the thiocarboxylate moiety of the carrier protein ThiS. In vitro, sulfur can be provided by H(2)S. The protein is Thiazole synthase of Staphylococcus carnosus (strain TM300).